The sequence spans 452 residues: Tripartite motif-containing protein 51 (452 aa).

An RING-type zinc finger spans residues Cys-15 to Lys-56. A B box-type zinc finger spans residues Ser-88–Ile-129. Residues Cys-93, His-96, Cys-115, and His-121 each coordinate Zn(2+). In terms of domain architecture, B30.2/SPRY spans Glu-269 to Phe-452.

The protein belongs to the TRIM/RBCC family.

In Homo sapiens (Human), this protein is Tripartite motif-containing protein 51 (TRIM51).